We begin with the raw amino-acid sequence, 944 residues long: Leucine--tRNA ligase (944 aa).

The 'HIGH' region signature appears at 40-51 (PYPSGAGLHVGH). The 'KMSKS' region signature appears at 718-722 (KMSKS). Position 721 (Lys721) interacts with ATP.

Belongs to the class-I aminoacyl-tRNA synthetase family.

The protein resides in the cytoplasm. The enzyme catalyses tRNA(Leu) + L-leucine + ATP = L-leucyl-tRNA(Leu) + AMP + diphosphate. This is Leucine--tRNA ligase from Bacteroides thetaiotaomicron (strain ATCC 29148 / DSM 2079 / JCM 5827 / CCUG 10774 / NCTC 10582 / VPI-5482 / E50).